The following is an 875-amino-acid chain: SPbeta prophage-derived uncharacterized protein YomG (875 aa).

Residues Ala351–Lys381 adopt a coiled-coil conformation. The region spanning Pro537–Ser648 is the Fibronectin type-III domain.

In Bacillus subtilis (strain 168), this protein is SPbeta prophage-derived uncharacterized protein YomG (yomG).